A 274-amino-acid chain; its full sequence is Large ribosomal subunit protein uL2 (274 aa).

The tract at residues 223 to 258 is disordered; sequence VAMNPVDHPHGGGEGRTSGGRHPVTPWGIPTKGYKT.

The protein belongs to the universal ribosomal protein uL2 family. Part of the 50S ribosomal subunit. Forms a bridge to the 30S subunit in the 70S ribosome.

Its function is as follows. One of the primary rRNA binding proteins. Required for association of the 30S and 50S subunits to form the 70S ribosome, for tRNA binding and peptide bond formation. It has been suggested to have peptidyltransferase activity; this is somewhat controversial. Makes several contacts with the 16S rRNA in the 70S ribosome. This is Large ribosomal subunit protein uL2 from Geotalea daltonii (strain DSM 22248 / JCM 15807 / FRC-32) (Geobacter daltonii).